Consider the following 619-residue polypeptide: Alpha-(1,6)-fucosyltransferase (619 aa).

Residues 1-17 are Cytoplasmic-facing; the sequence is MLLVRQLFGASANSWAR. Residues 18-38 form a helical; Signal-anchor for type II membrane protein membrane-spanning segment; it reads ALIIFVLAWIGLVYVFVVKLT. Residues 39 to 619 are Lumenal-facing; that stretch reads NTQGQQAAGE…TAKLPLYAGI (581 aa). 3 cysteine pairs are disulfide-bonded: Cys-253–Cys-315, Cys-261–Cys-279, and Cys-267–Cys-271. The region spanning 255-539 is the GT23 domain; the sequence is NARKLVCKLN…PDAAHRFKSL (285 aa). The SH3-binding motif lies at 345–351; sequence PRPPYLP. The interval 411–412 is important for donor substrate binding; it reads RR. The cysteines at positions 511 and 518 are disulfide-linked. In terms of domain architecture, SH3 spans 548–609; sequence QNAHNRRVVI…PSFKVEEKVD (62 aa).

This sequence belongs to the glycosyltransferase 23 family. Mn(2+) serves as cofactor. Requires Mg(2+) as cofactor.

It localises to the golgi apparatus. The protein resides in the golgi stack membrane. It carries out the reaction N(4)-{beta-D-GlcNAc-(1-&gt;2)-alpha-D-Man-(1-&gt;3)-[beta-D-GlcNAc-(1-&gt;2)-alpha-D-Man-(1-&gt;6)]-beta-D-Man-(1-&gt;4)-beta-D-GlcNAc-(1-&gt;4)-beta-D-GlcNAc}-L-asparaginyl-[protein] + GDP-beta-L-fucose = an N(4)-{beta-D-GlcNAc-(1-&gt;2)-alpha-D-Man-(1-&gt;3)-[beta-D-GlcNAc-(1-&gt;2)-alpha-D-Man-(1-&gt;6)]-beta-D-Man-(1-&gt;4)-beta-D-GlcNAc-(1-&gt;4)-[alpha-L-Fuc-(1-&gt;6)]-beta-D-GlcNAc}-L-asparaginyl-[protein] + GDP + H(+). It participates in protein modification; protein glycosylation. Catalyzes the addition of fucose in alpha 1-6 linkage to the first GlcNAc residue, next to the peptide chains in N-glycans. The addition is prevented if the GlcNAc residue is already fucosylated. The protein is Alpha-(1,6)-fucosyltransferase (FucT6) of Drosophila melanogaster (Fruit fly).